The chain runs to 43 residues: Defensin-A (43 aa).

Disulfide bonds link Cys3/Cys34, Cys20/Cys39, and Cys24/Cys41.

It localises to the secreted. Antibacterial protein. Strong activity against the Gram-positive bacteria M.luteus, B.megaterium and S.aureus. Reduced activity against Gram-positive bacterium B.subtilis and weak activity against Gram-negative bacterium X.japonicus. No detectable activity against the Gram-negative bacteria E.asbriae, E.coli, P.aeruginosa and S.marcescens. In Anomala cuprea (Cupreous chafer beetle), this protein is Defensin-A.